The following is a 481-amino-acid chain: Phototropic-responsive NPH3 family protein NPY4 (481 aa).

Residues 29–102 (TEIIIIIGNV…CYGITVTLNA (74 aa)) form the BTB domain. Residues 207–450 (DWWVEDLCEL…VQVLFFEQIR (244 aa)) enclose the NPH3 domain. Tyrosine 391 bears the Phosphotyrosine mark. A disordered region spans residues 456–481 (TGYSTPELTTTTLNTEDDEWDHEKEF). Residues 460–469 (TPELTTTTLN) show a composition bias toward low complexity.

Belongs to the NPH3 family. As to expression, expressed in the hypocotyl cells that would differentiate into vascular bundles. Highly expressed in primary root tips and radicles.

It localises to the cell membrane. Its subcellular location is the cytoplasm. The protein resides in the cytosol. It functions in the pathway protein modification; protein ubiquitination. In terms of biological role, may act as a substrate-specific adapter of an E3 ubiquitin-protein ligase complex (CUL3-RBX1-BTB) which mediates the ubiquitination and subsequent proteasomal degradation of target proteins. Plays an essential role in auxin-mediated organogenesis and in root gravitropic responses through the control of PIN proteins (e.g. PIN1 and PIN2) polarity in the root tip endodermal cell layer and in shoot epidermis. Recruited to the plasma membrane by PINs (e.g. PIN1 and PIN2) and, in concert with AGC kinases-mediated (e.g. D6PK and PID) PINs phosphorylation, maintains their polarity through limiting lateral diffusion-based escape. This Arabidopsis thaliana (Mouse-ear cress) protein is Phototropic-responsive NPH3 family protein NPY4.